A 176-amino-acid polypeptide reads, in one-letter code: Ribosome rescue factor SmrB (176 aa).

A Smr domain is found at 98–173; that stretch reads LDLHGLTQKQ…GTAALLVLVE (76 aa).

The protein belongs to the SmrB family. As to quaternary structure, associates with collided ribosomes, but not with correctly translating polysomes.

Its function is as follows. Acts as a ribosome collision sensor. Detects stalled/collided disomes (pairs of ribosomes where the leading ribosome is stalled and a second ribosome has collided with it) and endonucleolytically cleaves mRNA at the 5' boundary of the stalled ribosome. Stalled/collided disomes form a new interface (primarily via the 30S subunits) that binds SmrB. Cleaved mRNA becomes available for tmRNA ligation, leading to ribosomal subunit dissociation and rescue of stalled ribosomes. This is Ribosome rescue factor SmrB from Yersinia enterocolitica serotype O:8 / biotype 1B (strain NCTC 13174 / 8081).